We begin with the raw amino-acid sequence, 436 residues long: Adenylosuccinate synthetase (436 aa).

GTP is bound by residues 12-18 (GDEGKGK) and 40-42 (GHT). Aspartate 13 acts as the Proton acceptor in catalysis. 2 residues coordinate Mg(2+): aspartate 13 and glycine 40. Residues 13–16 (DEGK), 38–41 (NAGH), threonine 128, arginine 142, glutamine 223, threonine 238, and arginine 302 each bind IMP. Residue histidine 41 is the Proton donor of the active site. 298-304 (TTTGRRR) is a binding site for substrate. GTP is bound by residues arginine 304, 330 to 332 (KLD), and 412 to 414 (SLG).

The protein belongs to the adenylosuccinate synthetase family. Homodimer. Requires Mg(2+) as cofactor.

The protein localises to the cytoplasm. The catalysed reaction is IMP + L-aspartate + GTP = N(6)-(1,2-dicarboxyethyl)-AMP + GDP + phosphate + 2 H(+). It participates in purine metabolism; AMP biosynthesis via de novo pathway; AMP from IMP: step 1/2. Its function is as follows. Plays an important role in the de novo pathway of purine nucleotide biosynthesis. Catalyzes the first committed step in the biosynthesis of AMP from IMP. The polypeptide is Adenylosuccinate synthetase (Prochlorococcus marinus (strain MIT 9301)).